Consider the following 235-residue polypeptide: 2-C-methyl-D-erythritol 4-phosphate cytidylyltransferase (235 aa).

This sequence belongs to the IspD/TarI cytidylyltransferase family. IspD subfamily.

The catalysed reaction is 2-C-methyl-D-erythritol 4-phosphate + CTP + H(+) = 4-CDP-2-C-methyl-D-erythritol + diphosphate. Its pathway is isoprenoid biosynthesis; isopentenyl diphosphate biosynthesis via DXP pathway; isopentenyl diphosphate from 1-deoxy-D-xylulose 5-phosphate: step 2/6. In terms of biological role, catalyzes the formation of 4-diphosphocytidyl-2-C-methyl-D-erythritol from CTP and 2-C-methyl-D-erythritol 4-phosphate (MEP). The chain is 2-C-methyl-D-erythritol 4-phosphate cytidylyltransferase from Mycolicibacterium paratuberculosis (strain ATCC BAA-968 / K-10) (Mycobacterium paratuberculosis).